The chain runs to 584 residues: Arginine--tRNA ligase (584 aa).

Positions proline 127–histidine 137 match the 'HIGH' region motif.

It belongs to the class-I aminoacyl-tRNA synthetase family. In terms of assembly, monomer.

It localises to the cytoplasm. It carries out the reaction tRNA(Arg) + L-arginine + ATP = L-arginyl-tRNA(Arg) + AMP + diphosphate. The protein is Arginine--tRNA ligase of Alcanivorax borkumensis (strain ATCC 700651 / DSM 11573 / NCIMB 13689 / SK2).